Reading from the N-terminus, the 44-residue chain is Phycoerythrin alpha-1 chain (44 aa).

Residues 1–44 (AMDKSAKAPQITIFDHRGCSRAPKSETGGTATKDDQMMVKVSQV) form a disordered region. A 5-hydroxylysine modification is found at K4. The 15,16-dihydrobiliverdin site is built by C19 and R21. The interval 24–26 (KSE) is 15,16-dihydrobiliverdin chromophore. Residue K40 participates in 15,16-dihydrobiliverdin binding.

The protein belongs to the phycoerythrin family. In terms of assembly, heterotetramer of 2 different alpha chains and 2 identical beta chains. The subunit composition could comprise of any combination of 2 out of 4 different alpha units with an invariant beta unit. In terms of processing, contains one covalently linked 15,16-dihydrobiliverdin chromophore.

It is found in the plastid. The protein resides in the chloroplast thylakoid membrane. In terms of biological role, light-harvesting photosynthetic tetrapyrrole chromophore-protein from the phycobiliprotein complex. In Rhodomonas sp. (strain CS 24) (Chroomonas sp. (strain CS24)), this protein is Phycoerythrin alpha-1 chain (cpeA1).